The sequence spans 545 residues: Chaperonin GroEL (545 aa).

Residues T30 to P33, K51, D87 to T91, G415, and D495 contribute to the ATP site.

This sequence belongs to the chaperonin (HSP60) family. As to quaternary structure, forms a cylinder of 14 subunits composed of two heptameric rings stacked back-to-back. Interacts with the co-chaperonin GroES.

The protein localises to the cytoplasm. It catalyses the reaction ATP + H2O + a folded polypeptide = ADP + phosphate + an unfolded polypeptide.. Its function is as follows. Together with its co-chaperonin GroES, plays an essential role in assisting protein folding. The GroEL-GroES system forms a nano-cage that allows encapsulation of the non-native substrate proteins and provides a physical environment optimized to promote and accelerate protein folding. In Shewanella sp. (strain MR-7), this protein is Chaperonin GroEL.